Consider the following 453-residue polypeptide: Chromosomal replication initiator protein DnaA (453 aa).

The tract at residues 1–74 (MKEKQFWNRI…GFEIYDAEIT (74 aa)) is domain I, interacts with DnaA modulators. The interval 74-113 (TPHYIFTKPQDTTSSQVEEATNLTLYDYSPKLVSIPYSDT) is domain II. Residues 114-331 (GLKEKYTFDN…GAINDITLIA (218 aa)) are domain III, AAA+ region. Glycine 158, glycine 160, lysine 161, and threonine 162 together coordinate ATP. A domain IV, binds dsDNA region spans residues 332-453 (RVKKIKDITI…EIESIKKKIK (122 aa)).

Belongs to the DnaA family. In terms of assembly, oligomerizes as a right-handed, spiral filament on DNA at oriC. Interacts (via domains I and III) with CcrZ.

The protein localises to the cytoplasm. With respect to regulation, ccrZ stimulates DnaA, possibly by phosphorylation of an intermediate molecule, to initiate DNA replication. Its function is as follows. Plays an essential role in the initiation and regulation of chromosomal replication. ATP-DnaA binds to the origin of replication (oriC) to initiate formation of the DNA replication initiation complex once per cell cycle. Binds the DnaA box (a 9 base pair repeat at the origin) and separates the double-stranded (ds)DNA. Forms a right-handed helical filament on oriC DNA; dsDNA binds to the exterior of the filament while single-stranded (ss)DNA is stabiized in the filament's interior. The ATP-DnaA-oriC complex binds and stabilizes one strand of the AT-rich DNA unwinding element (DUE), permitting loading of DNA polymerase. After initiation quickly degrades to an ADP-DnaA complex that is not apt for DNA replication. Binds acidic phospholipids. Mutations in this gene suppress a deletion of cell cycle regulator ccrZ. This chain is Chromosomal replication initiator protein DnaA, found in Streptococcus pneumoniae serotype 2 (strain D39 / NCTC 7466).